The following is a 446-amino-acid chain: MSFPHFGHPYRGASQFLASASSSTTCCESTQRSVSDVASGSTPAPALCCAPYDSRLLGSARPELGAALGIYGAPYAAAAAAQSYPGYLPYSPEPPSLYGALNPQYEFKEAAGSFTSSLAQPGAYYPYERTLGQYQYERYGAVELSGAGRRKNATRETTSTLKAWLNEHRKNPYPTKGEKIMLAIITKMTLTQVSTWFANARRRLKKENKMTWAPKNKGGEERKAEGGEEDSLGCLTADTKEVTASQEARGLRLSDLEDLEEEEEEEEEAEDEEVVATAGDRLTEFRKGAQSLPGPCAAAREGRLERRECGLAAPRFSFNDPSGSEEADFLSAETGSPRLTMHYPCLEKPRIWSLAHTATASAVEGAPPARPRPRSPECRMIPGQPPASARRLSVPRDSACDESSCIPKAFGNPKFALQGLPLNCAPCPRRSEPVVQCQYPSGAEAG.

The homeobox DNA-binding region spans 146 to 208; that stretch reads GAGRRKNATR…NARRRLKKEN (63 aa). Disordered regions lie at residues 208–273 and 362–394; these read NKMT…EDEE and AVEG…RLSV. Basic and acidic residues predominate over residues 217 to 226; the sequence is KGGEERKAEG. The segment covering 256-273 has biased composition (acidic residues); it reads LEDLEEEEEEEEEAEDEE.

Belongs to the TALE/IRO homeobox family.

The protein localises to the nucleus. Its function is as follows. Transcription factor. Binds to the iroquois binding site (IBS) motif of target genes to regulate gene expression; functions as a transcriptional activator or repressor. Modulates expression of RCVRN, VSX1, BHLHE22/BHLHB5 and TACR3/Nk3r. Required downstream of retinal bipolar cell specification for the terminal differentiation of type 2, type 3a and possibly type 6 bipolar cells. The polypeptide is Iroquois-class homeodomain protein IRX-6 (IRX6) (Homo sapiens (Human)).